Consider the following 392-residue polypeptide: Pannexin-3 (392 aa).

At 1 to 39 (MSLAHTAAEYMLSDALLPDRRGSRLKGLRLELPLDKMVK) the chain is on the cytoplasmic side. The helical transmembrane segment at 40 to 60 (FVTVGFPLLLMSLAFAQEFSS) threads the bilayer. Residues 61-113 (GSPISCFSPSNFSVRQAVFVDSSCWDSLAHYKQDEAGQYTVKSLWPHKALPYS) are Extracellular-facing. N-linked (GlcNAc...) asparagine glycosylation occurs at N71. A helical transmembrane segment spans residues 114-134 (LLALAVAMYLPVLLWQYAAVP). Topologically, residues 135–215 (ALSSDLLFII…VATYLLRNAL (81 aa)) are cytoplasmic. Residues 216–236 (LLLFTSATYLYLGHFHLDVFF) traverse the membrane as a helical segment. The Extracellular portion of the chain corresponds to 237–267 (QEEFSCSIKTGLLHEETHVPELITCRLTSLS). A helical transmembrane segment spans residues 268–288 (VFQIVSVSSVAIYTVLVPVII). At 289–392 (YNLTRLCRWD…LTQHTYDEHP (104 aa)) the chain is on the cytoplasmic side.

This sequence belongs to the pannexin family. As to quaternary structure, homoheptameric. Skin.

It localises to the cell membrane. The protein localises to the cell junction. Its subcellular location is the gap junction. The protein resides in the endoplasmic reticulum membrane. It carries out the reaction Ca(2+)(in) = Ca(2+)(out). The enzyme catalyses ATP(in) = ATP(out). Its function is as follows. Regulator of osteoblast differentiation by functionning as a Ca(2+) channel in the endoplasmic reticulum which regulates calmodulin (CaM) pathways. Allows ATP release into the extracellular space and activation or purinergic receptors. This is Pannexin-3 (Panx3) from Rattus norvegicus (Rat).